A 151-amino-acid polypeptide reads, in one-letter code: Ribosome maturation factor RimP (151 aa).

Belongs to the RimP family.

The protein localises to the cytoplasm. In terms of biological role, required for maturation of 30S ribosomal subunits. This Thermoanaerobacter pseudethanolicus (strain ATCC 33223 / 39E) (Clostridium thermohydrosulfuricum) protein is Ribosome maturation factor RimP.